Consider the following 474-residue polypeptide: Bifunctional protein HldE (474 aa).

The tract at residues 1 to 321 is ribokinase; it reads MILSSSLRPT…EYLHSSHQGE (321 aa). 198-201 contacts ATP; sequence NKKE. The active site involves D266. The tract at residues 348-474 is cytidylyltransferase; the sequence is FTNGCFDILH…SAVVKKIQGS (127 aa).

In the N-terminal section; belongs to the carbohydrate kinase PfkB family. It in the C-terminal section; belongs to the cytidylyltransferase family. As to quaternary structure, homodimer.

It carries out the reaction D-glycero-beta-D-manno-heptose 7-phosphate + ATP = D-glycero-beta-D-manno-heptose 1,7-bisphosphate + ADP + H(+). It catalyses the reaction D-glycero-beta-D-manno-heptose 1-phosphate + ATP + H(+) = ADP-D-glycero-beta-D-manno-heptose + diphosphate. The protein operates within nucleotide-sugar biosynthesis; ADP-L-glycero-beta-D-manno-heptose biosynthesis; ADP-L-glycero-beta-D-manno-heptose from D-glycero-beta-D-manno-heptose 7-phosphate: step 1/4. It functions in the pathway nucleotide-sugar biosynthesis; ADP-L-glycero-beta-D-manno-heptose biosynthesis; ADP-L-glycero-beta-D-manno-heptose from D-glycero-beta-D-manno-heptose 7-phosphate: step 3/4. Functionally, catalyzes the phosphorylation of D-glycero-D-manno-heptose 7-phosphate at the C-1 position to selectively form D-glycero-beta-D-manno-heptose-1,7-bisphosphate. Catalyzes the ADP transfer from ATP to D-glycero-beta-D-manno-heptose 1-phosphate, yielding ADP-D-glycero-beta-D-manno-heptose. The sequence is that of Bifunctional protein HldE from Wolinella succinogenes (strain ATCC 29543 / DSM 1740 / CCUG 13145 / JCM 31913 / LMG 7466 / NCTC 11488 / FDC 602W) (Vibrio succinogenes).